Reading from the N-terminus, the 195-residue chain is MAGMRRLELAEALHLGPGWRHACHAMLYAPDPGLLFGRIPLRYAVLMQMRFDGRLGFPGGFVDLRDGSLEDGLNRELGEELGEAAAAFRVERADYRSSHAGSRPRVVAHFYTKLLTLEQLTAVEMGAPRARDHGLEVLGLVRVPLYTLRDRVGGLPAFLENTFIGNAREQLLEAVQNLGLLEPGSFAHLKISTPP.

Residues 18–168 (GWRHACHAML…LENTFIGNAR (151 aa)) form the Nudix hydrolase domain. Substrate is bound by residues His-24, Arg-50, and Phe-57. Gly-59, Glu-76, Glu-80, and His-99 together coordinate Mn(2+). The Nudix box motif lies at 61–82 (FVDLRDGSLEDGLNRELGEELG). The substrate site is built by Asn-166 and Gln-170. Glu-173 is a binding site for Mn(2+).

Belongs to the Nudix hydrolase family. NUDT16 subfamily. Homodimer. Mg(2+) is required as a cofactor. The cofactor is Mn(2+). It depends on Co(2+) as a cofactor.

The protein localises to the nucleus. It is found in the nucleolus. Its subcellular location is the nucleoplasm. It localises to the cytoplasm. The catalysed reaction is a 5'-end (N(7)-methyl 5'-triphosphoguanosine)-ribonucleoside in mRNA + H2O = N(7)-methyl-GDP + a 5'-end phospho-ribonucleoside in mRNA + 2 H(+). It catalyses the reaction IDP + H2O = IMP + phosphate + H(+). It carries out the reaction dIDP + H2O = dIMP + phosphate + H(+). The enzyme catalyses a 5'-end NAD(+)-phospho-ribonucleoside in mRNA + H2O = a 5'-end phospho-ribonucleoside in mRNA + NAD(+) + H(+). The catalysed reaction is a 5'-end FAD-phospho-ribonucleoside in mRNA + H2O = a 5'-end phospho-adenosine-phospho-ribonucleoside in mRNA + FMN + 2 H(+). It catalyses the reaction a 5'-end CoA-ribonucleoside in mRNA + H2O = a 5'-end phospho-adenosine-phospho-ribonucleoside in mRNA + (R)-4'-phosphopantetheine + 2 H(+). RNA-binding and decapping enzyme that catalyzes the cleavage of the cap structure of snoRNAs and mRNAs in a metal-dependent manner. Part of the U8 snoRNP complex that is required for the accumulation of mature 5.8S and 28S rRNA. Has diphosphatase activity and removes m7G and/or m227G caps from U8 snoRNA and leaves a 5'monophosphate on the RNA. Also catalyzes the cleavage of the cap structure on mRNAs. Does not hydrolyze cap analog structures like 7-methylguanosine nucleoside triphosphate (m7GpppG). Also hydrolysis m7G- and m227G U3-capped RNAs but with less efficiencies. Has broad substrate specificity with manganese or cobalt as cofactor and can act on various RNA species. Binds to the U8 snoRNA; metal is not required for RNA-binding. May play a role in the regulation of snoRNAs and mRNAs degradation. Also acts as a phosphatase; hydrolyzes the non-canonical purine nucleotides inosine diphosphate (IDP) and deoxyinosine diphosphate (dITP) as well as guanosine diphosphate (GDP), deoxyguanosine diphosphate (dGDP), xanthine diphosphate (XDP), inosine triphosphate (ITP) and deoxyinosine triphosphate (ITP) to their respective monophosphate derivatives and does not distinguish between the deoxy- and ribose forms. The order of activity with different substrates is IDP &gt; dIDP &gt;&gt; GDP = dGDP &gt; XDP = ITP = dITP. Binds strongly to GTP, ITP and XTP. Participates in the hydrolysis of dIDP/IDP and probably excludes non-canonical purines from RNA and DNA precursor pools, thus preventing their incorporation into RNA and DNA and avoiding chromosomal lesions. Exhibits decapping activity towards NAD-capped RNAs and FAD-capped RNAs. Exhibits decapping activity towards dpCoA-capped RNAs in vitro. This Ovis aries (Sheep) protein is U8 snoRNA-decapping enzyme (NUDT16).